We begin with the raw amino-acid sequence, 307 residues long: Chlorophyll a-b binding protein 1, chloroplastic (307 aa).

The N-terminal 44 residues, 1–44 (MAPYSVVASVLAAAPPQQSGSVRQLPSTINRAITQRSQSRHVAS), are a transit peptide targeting the chloroplast. The interval 34–54 (TQRSQSRHVASASSASSPTTM) is disordered. Residues Thr52, Glu63, Ile64, Gly65, Tyr68, Leu81, Pro86, Arg89, Gly90, Phe91, and Asp92 each coordinate chlorophyll a. Residue Leu96 coordinates loroxanthin. A helical transmembrane segment spans residues 111–143 (NYDESRLRWLLEGELYNGRLAMLAVVGVLTVEA). The chlorophyll a site is built by Leu120, Glu124, Asn127, Met132, and Lys146. Residue Trp149 coordinates loroxanthin. Residues Glu151, Tyr163, His171, Glu178, Arg181, Glu190, Arg198, and Asp200 each coordinate chlorophyll a. Residues 161-186 (TPYVVAVVGGHLAFALLEKKRLENFR) form a helical membrane-spanning segment. Residues Asp200 and Leu202 each coordinate all-trans-violaxanthin. Positions 204, 208, 214, 215, 218, 222, and 224 each coordinate chlorophyll a. The helical transmembrane segment at 213 to 238 (DYNRQAEVRNCRLAMLTFLGFSVQAW) threads the bilayer. Phe230 provides a ligand contact to loroxanthin. Phe233 is a binding site for all-trans-violaxanthin. Gln236 contacts chlorophyll a. Pro244 provides a ligand contact to all-trans-violaxanthin. The chlorophyll a site is built by Asn247, His251, Pro255, Phe256, Ala258, Asn259, Ile260, and Phe274. A helical transmembrane segment spans residues 265–289 (DRGTNVVAIFSAFAAVMHIAELARE).

This sequence belongs to the light-harvesting chlorophyll a/b-binding (LHC) protein family. In terms of assembly, homooligomer. Component of a light-harvesting complex (LHC) consisting of 11 chlorophyll a-b binding proteins. Binds 11 chlorophylls (Chl-a and Chl-b) and the 2 carotenoids violaxanthin and loroxanthin. is required as a cofactor.

Its subcellular location is the plastid. The protein resides in the chloroplast thylakoid membrane. Component of a light-harvesting complex (LHC). The LHC functions as a light receptor, it captures and delivers excitation energy to photosystems with which it is closely associated. Functions in a far-red LHC by absorbing far-red light and promoting photosystem II (PSII) excitation, likely with entropy-driven uphill excitation energy transfer. Exhibits a typical absorption band at 671 nm (Qy band), as well as a large far-red absorption band at 706.5 together with fluorescence emission at around 713 nm (F713). This Prasiola crispa (Green alga) protein is Chlorophyll a-b binding protein 1, chloroplastic.